Consider the following 431-residue polypeptide: Fumarylacetoacetase (431 aa).

D133 serves as a coordination point for Ca(2+). Y135 is a substrate binding site. H140 functions as the Proton acceptor in the catalytic mechanism. Residue R149 coordinates substrate. Ca(2+) is bound by residues E209, E211, and D243. Position 243 (D243) interacts with Mg(2+). Substrate-binding residues include Q250 and Y254. Mg(2+) is bound by residues K263 and T267. Position 362 (T362) interacts with substrate.

This sequence belongs to the FAH family. Requires Ca(2+) as cofactor. The cofactor is Mg(2+).

The catalysed reaction is 4-fumarylacetoacetate + H2O = acetoacetate + fumarate + H(+). It participates in amino-acid degradation; L-phenylalanine degradation; acetoacetate and fumarate from L-phenylalanine: step 6/6. Its function is as follows. Use of phenylalanine and phenylacetate as a carbon source. This Emericella nidulans (strain FGSC A4 / ATCC 38163 / CBS 112.46 / NRRL 194 / M139) (Aspergillus nidulans) protein is Fumarylacetoacetase (fahA).